The following is a 339-amino-acid chain: Ferredoxin--NADP reductase (339 aa).

E35, Q43, Y48, V88, F122, D287, and S327 together coordinate FAD.

Belongs to the ferredoxin--NADP reductase type 2 family. In terms of assembly, homodimer. Requires FAD as cofactor.

It catalyses the reaction 2 reduced [2Fe-2S]-[ferredoxin] + NADP(+) + H(+) = 2 oxidized [2Fe-2S]-[ferredoxin] + NADPH. The sequence is that of Ferredoxin--NADP reductase from Leuconostoc citreum (strain KM20).